A 286-amino-acid polypeptide reads, in one-letter code: MNQDTLHRYLFDNADVRGELVQLQDSYQQVISAQEYPAVLQVLLGELMAATSLLTATLKFSGDISVQLQGNGPVSLAVINGNNLQELRGVARWNAELADDASLTDLFGQGYMVITLTPDEGERYQGVVALDKPTLAACVEEYFNQSEQLPTGIWLFADGKQAAGMFLQILPSKEDHNPDFEHLSQLTSTIKAEELFTLDAESVLHRLYHQEEVRLFDPIDVSFKCTCSHERSAGAIKTLDQAEIEAILAEDGKIEMGCEYCHAKYIFDAIDVAALFANGQTSTTQQ.

Disulfide bonds link Cys225–Cys227 and Cys258–Cys261.

The protein belongs to the HSP33 family. In terms of processing, under oxidizing conditions two disulfide bonds are formed involving the reactive cysteines. Under reducing conditions zinc is bound to the reactive cysteines and the protein is inactive.

It is found in the cytoplasm. Redox regulated molecular chaperone. Protects both thermally unfolding and oxidatively damaged proteins from irreversible aggregation. Plays an important role in the bacterial defense system toward oxidative stress. The sequence is that of 33 kDa chaperonin from Shewanella baltica (strain OS223).